We begin with the raw amino-acid sequence, 746 residues long: MEGPEITAAEAVIDNGSFGTRTIRFETGRLAKQAAGSAAVYLDGESFLLSATTAGKSPKDQFDFFPLTVDVEERSYAAGKIPGSFFRREGRPSTEAILTCRLIDRPLRPSFVKGLRNEVQVVVSVMALHPDDAYDVVAINVASLSTQLSGLPFSGPIGGVRIALIDGQWVAFPRYSELERAVFDMVVAGRVVTTADGSQDVAIMMVEAEATEGSWNLIKDQGATAPTEEVVAAGLEAAKPFIAELVRAQAEVAATAAKPTAAFPTFPDYQDDVYQAVFEAASADLTAALQIGGKQDRETRIDEVKEAVKAQLADAFAGREKEVSAAYRSVQKALIRQRVLKDGVRIDGRGLADIRTLSAEVEVLPRVHGSALFERGETQILGVTTLNMLRMEQQLDTLSPVTRKRYMHNYNFPPYSTGETGRVGSPKRREIGHGALAERALVPVLPAREDFPYAIRQVSEALGSNGSTSMGSVCASTLSLLNAGVPLRAAVAGIAMGLISDTVDGETRYAALTDILGAEDAFGDMDFKVAGTKEFVTAIQLDTKLDGIPASVLAGALTQARDARLHILDVMAEAIDAPDEMSPTAPRIITVKVPVDKIGEVIGPKGKMINQIQEDTGADISIEDDGTVFIGAVDGPSAEAARAAVNAIANPTMPEVGERYLGTVVKTTTFGAFVSLMPGKDGLLHISQLRKLSGGKRVDNVEDVVAVGQKVQVEIAEIDPRGKLSLVPVVAEEASAEAAAAEPADA.

Mg(2+) contacts are provided by Asp-520 and Asp-526. The KH domain occupies 586-648 (PRIITVKVPV…EAARAAVNAI (63 aa)). One can recognise an S1 motif domain in the interval 657-729 (GERYLGTVVK…PRGKLSLVPV (73 aa)).

The protein belongs to the polyribonucleotide nucleotidyltransferase family. Requires Mg(2+) as cofactor.

It localises to the cytoplasm. It catalyses the reaction RNA(n+1) + phosphate = RNA(n) + a ribonucleoside 5'-diphosphate. Functionally, involved in mRNA degradation. Catalyzes the phosphorolysis of single-stranded polyribonucleotides processively in the 3'- to 5'-direction. The protein is Polyribonucleotide nucleotidyltransferase of Kineococcus radiotolerans (strain ATCC BAA-149 / DSM 14245 / SRS30216).